The following is a 195-amino-acid chain: Imidazoleglycerol-phosphate dehydratase (195 aa).

The protein belongs to the imidazoleglycerol-phosphate dehydratase family.

Its subcellular location is the cytoplasm. It carries out the reaction D-erythro-1-(imidazol-4-yl)glycerol 3-phosphate = 3-(imidazol-4-yl)-2-oxopropyl phosphate + H2O. It participates in amino-acid biosynthesis; L-histidine biosynthesis; L-histidine from 5-phospho-alpha-D-ribose 1-diphosphate: step 6/9. This chain is Imidazoleglycerol-phosphate dehydratase, found in Acetivibrio thermocellus (strain ATCC 27405 / DSM 1237 / JCM 9322 / NBRC 103400 / NCIMB 10682 / NRRL B-4536 / VPI 7372) (Clostridium thermocellum).